A 208-amino-acid polypeptide reads, in one-letter code: Guanylate kinase (208 aa).

The Guanylate kinase-like domain maps to Gly-21–Val-201. Gly-28–Ser-35 contributes to the ATP binding site.

It belongs to the guanylate kinase family.

Its subcellular location is the cytoplasm. The enzyme catalyses GMP + ATP = GDP + ADP. In terms of biological role, essential for recycling GMP and indirectly, cGMP. This Mycobacterium bovis (strain ATCC BAA-935 / AF2122/97) protein is Guanylate kinase (gmk).